Consider the following 504-residue polypeptide: Cytochrome P450 2D10 (504 aa).

A Phosphoserine modification is found at Ser249. A heme-binding site is contributed by Cys446.

It belongs to the cytochrome P450 family. Requires heme as cofactor.

The protein localises to the endoplasmic reticulum membrane. Its subcellular location is the microsome membrane. It carries out the reaction an organic molecule + reduced [NADPH--hemoprotein reductase] + O2 = an alcohol + oxidized [NADPH--hemoprotein reductase] + H2O + H(+). Its function is as follows. Cytochromes P450 are a group of heme-thiolate monooxygenases. In liver microsomes, this enzyme is involved in an NADPH-dependent electron transport pathway. It oxidizes a variety of structurally unrelated compounds, including steroids, fatty acids, and xenobiotics. The protein is Cytochrome P450 2D10 (Cyp2d10) of Mus musculus (Mouse).